A 274-amino-acid polypeptide reads, in one-letter code: Long chain fatty acid elongase 5 (274 aa).

Residues 1 to 23 (MMDQILGTNFTYEGAKEVARGLE) are Extracellular-facing. A helical transmembrane segment spans residues 24–44 (GFSAKLAVGYIATIFGLKYYM). At 45 to 61 (KDRKAFDLSTPLNIWNG) the chain is on the cytoplasmic side. Residues 62-82 (ILSTFSLLGFLFTFPTLLSVI) traverse the membrane as a helical segment. Over 83-105 (RKDGFSHTYSHVSELYTDSTSGY) the chain is Extracellular. The chain crosses the membrane as a helical span at residues 106-126 (WIFLWVISKIPELLDTVFIVL). The Cytoplasmic portion of the chain corresponds to 127 to 129 (RKR). Residues 130 to 150 (PLIFMHWYHHALTGYYALVCY) form a helical membrane-spanning segment. Topologically, residues 151–156 (HEDAVH) are extracellular. A helical transmembrane segment spans residues 157–177 (MVWVVWMNYIIHAFMYGYYLL). The Cytoplasmic portion of the chain corresponds to 178-187 (KSLKVPIPPS). A helical membrane pass occupies residues 188–208 (VAQAITTSQMVQFAVAIFAQV). The Extracellular portion of the chain corresponds to 209–227 (HVSYKHYVEGVEGLAYSFR). Residues 228 to 248 (GTAIGFFMLTTYFYLWIQFYK) traverse the membrane as a helical segment. At 249-274 (EHYLKNGGKKYNLAKDQAKTQTKKAN) the chain is on the cytoplasmic side.

The protein belongs to the ELO family. As to expression, expressed in the gut and unidentified head cells.

It is found in the membrane. It carries out the reaction 11-methyldodecanoyl-CoA + malonyl-CoA + H(+) = 3-oxoisopentadecanoyl-CoA + CO2 + CoA. It catalyses the reaction isopentadecanoyl-CoA + malonyl-CoA + H(+) = 3-oxoisoheptadecanoyl-CoA + CO2 + CoA. It participates in lipid metabolism; fatty acid biosynthesis. Catalyzes the first and rate-limiting reaction of the four reactions that constitute the long-chain fatty acids elongation cycle. Uses malonyl-CoA to add 2 carbons per cycle to the chain of long-chain fatty acids. Condensing enzyme required for the formation of isopentadecanoate (C15iso) and isoheptadecanoate (C17iso), both play critical roles in animal development and growth. In Caenorhabditis elegans, this protein is Long chain fatty acid elongase 5.